We begin with the raw amino-acid sequence, 125 residues long: uncharacterized protein (125 aa).

The region spanning M1 to T63 is the HTH dtxR-type domain.

This sequence belongs to the DtxR/MntR family.

This is an uncharacterized protein from Methanocaldococcus jannaschii (strain ATCC 43067 / DSM 2661 / JAL-1 / JCM 10045 / NBRC 100440) (Methanococcus jannaschii).